A 163-amino-acid chain; its full sequence is 3-hydroxyacyl-[acyl-carrier-protein] dehydratase FabZ (163 aa).

H64 is a catalytic residue.

Belongs to the thioester dehydratase family. FabZ subfamily.

The protein localises to the cytoplasm. The catalysed reaction is a (3R)-hydroxyacyl-[ACP] = a (2E)-enoyl-[ACP] + H2O. Its function is as follows. Involved in unsaturated fatty acids biosynthesis. Catalyzes the dehydration of short chain beta-hydroxyacyl-ACPs and long chain saturated and unsaturated beta-hydroxyacyl-ACPs. This chain is 3-hydroxyacyl-[acyl-carrier-protein] dehydratase FabZ, found in Caulobacter sp. (strain K31).